Reading from the N-terminus, the 529-residue chain is Cytochrome P450 monooxygenase oblE (529 aa).

The chain crosses the membrane as a helical span at residues 38-58 (WQYIVTLLIAIITYDQVMYIW). A heme-binding site is contributed by cysteine 477.

This sequence belongs to the cytochrome P450 family. Heme serves as cofactor.

The protein resides in the membrane. The protein operates within secondary metabolite biosynthesis; terpenoid biosynthesis. Cytochrome P450 monooxygenase; part of the gene cluster that mediates the biosynthesis of the sesterterpenes ophiobolins, fungal phytotoxins with potential anti-cancer activities. The first step of the pathway is performed by the sesterterpene synthase oblA that possesses both prenyl transferase and terpene cyclase activity, converting isopentenyl diphosphate and dimethylallyl diphosphate into geranylfarnesyl diphosphate (GFPP) and further converting GFPP into ophiobolin F, respectively. Other sesterterpenoids (C(25) terpenoids) are found as minor products of oblA. The cytochrome P450 monooxygenase oblB then catalyzes a four-step oxidative transformation of ophiobolin F to yield ophiobolin C. The function of the cytochrome P450 monooxygenase oblE has still to be determined. The polypeptide is Cytochrome P450 monooxygenase oblE (Emericella variicolor (Aspergillus stellatus)).